A 417-amino-acid chain; its full sequence is Phosphoglycerate kinase 1 (417 aa).

Residues V23, D24, F25, N26, N38, R39, S62, H63, G65, R66, L121, R122, H168, and R169 each coordinate (2R)-3-phosphoglycerate. G212 serves as a coordination point for ADP. G212 is a binding site for CDP. AMP is bound by residues A213 and K214. Residue A213 coordinates ATP. Residue A213 coordinates Mg(2+). D217 provides a ligand contact to CDP. Residue D217 participates in Mg(2+) binding. K218 is an AMP binding site. Position 218 (K218) interacts with ATP. Position 236 (G236) interacts with ADP. CDP is bound at residue G236. 2 residues coordinate AMP: G237 and G311. ATP-binding residues include G237 and G311. Residues G336 and F341 each contribute to the CDP site. Position 341 (F341) interacts with ADP. E342 is a binding site for AMP. ATP is bound by residues E342, D374, and T375. D374 contributes to the Mg(2+) binding site.

The protein belongs to the phosphoglycerate kinase family. Monomer. Requires Mg(2+) as cofactor.

The protein resides in the cytoplasm. It localises to the mitochondrion. The enzyme catalyses (2R)-3-phosphoglycerate + ATP = (2R)-3-phospho-glyceroyl phosphate + ADP. Its pathway is carbohydrate degradation; glycolysis; pyruvate from D-glyceraldehyde 3-phosphate: step 2/5. Catalyzes one of the two ATP producing reactions in the glycolytic pathway via the reversible conversion of 1,3-diphosphoglycerate to 3-phosphoglycerate. Both L- and D- forms of purine and pyrimidine nucleotides can be used as substrates, but the activity is much lower on pyrimidines. Negatively regulates the biosynthesis of acetyl-CoA from pyruvate in the mitochondrion. This Rhizopus niveus protein is Phosphoglycerate kinase 1 (PGK1).